The sequence spans 460 residues: MKVLSALCVLLVSVATAKQQLSEVEYRNAFTNWMIAHQRHYSSEEFNGRYNIFKANMDYVNEWNTKGSETVLGLNVFADISNEEYRATYLGTPFDASSLEMTESDKIFDASAQVDWRTQGAVTPIKNQGQCGGCWSFSTTGATEGAQYLANGKKNLVSLSEQNLIDCSGSYGNNGCEGGLMTLAFEYIINNKGIDTESSYPYTAEDGKKCKFNPKNVAAQLSSYVNVTSGSESDLAAKVTQGPTSVAIDASNQSFQLYVSGIYNEPACSSTQLDHGVLAVGFGTGSGSSGSHGGSQSQSAGSDSQSAGSESSQSESGSQSQSESGSQSQSQSGSQSFSGSLYSGSYSGSQSGSQSGNSGAAVKQTGAGSGSGSGSGSGSGSGSGSVSGSASGSASGSASGSSSGSNSNGGVYPTAGDYWIVKNSWGTSWGMDGYILMTKGNNNQCGIATMASRPTAVASL.

Residues 1–17 form the signal peptide; that stretch reads MKVLSALCVLLVSVATA. Residues 18 to 111 constitute a propeptide, activation peptide; sequence KQQLSEVEYR…TESDKIFDAS (94 aa). 2 cysteine pairs are disulfide-bonded: C131–C176 and C167–C210. C134 is a catalytic residue. 2 N-linked (GlcNAc...) asparagine glycosylation sites follow: N226 and N252. C268 and C445 are joined by a disulfide. H275 is an active-site residue. A disordered region spans residues 285–409; the sequence is GSGSSGSHGG…GSSSGSNSNG (125 aa). Over residues 294–359 the composition is skewed to low complexity; it reads GSQSQSAGSD…QSGSQSGNSG (66 aa). Positions 367–385 are enriched in gly residues; that stretch reads AGSGSGSGSGSGSGSGSGS. The span at 386-409 shows a compositional bias: low complexity; sequence VSGSASGSASGSASGSSSGSNSNG. N423 is an active-site residue.

It belongs to the peptidase C1 family. Glycosylated; contains GlcNAc-alpha-1-P-Ser residues. Also N-glycosylated.

It is found in the lysosome. The sequence is that of Cysteine proteinase 7 (cprG) from Dictyostelium discoideum (Social amoeba).